A 339-amino-acid polypeptide reads, in one-letter code: Methionyl-tRNA formyltransferase (339 aa).

Residue 110-113 participates in (6S)-5,6,7,8-tetrahydrofolate binding; it reads SLLP.

It belongs to the Fmt family.

The catalysed reaction is L-methionyl-tRNA(fMet) + (6R)-10-formyltetrahydrofolate = N-formyl-L-methionyl-tRNA(fMet) + (6S)-5,6,7,8-tetrahydrofolate + H(+). Attaches a formyl group to the free amino group of methionyl-tRNA(fMet). The formyl group appears to play a dual role in the initiator identity of N-formylmethionyl-tRNA by promoting its recognition by IF2 and preventing the misappropriation of this tRNA by the elongation apparatus. This chain is Methionyl-tRNA formyltransferase, found in Prochlorococcus marinus (strain SARG / CCMP1375 / SS120).